The chain runs to 172 residues: Adenine phosphoribosyltransferase (172 aa).

Belongs to the purine/pyrimidine phosphoribosyltransferase family. In terms of assembly, homodimer.

Its subcellular location is the cytoplasm. It catalyses the reaction AMP + diphosphate = 5-phospho-alpha-D-ribose 1-diphosphate + adenine. It functions in the pathway purine metabolism; AMP biosynthesis via salvage pathway; AMP from adenine: step 1/1. Its function is as follows. Catalyzes a salvage reaction resulting in the formation of AMP, that is energically less costly than de novo synthesis. The polypeptide is Adenine phosphoribosyltransferase (Desulforamulus reducens (strain ATCC BAA-1160 / DSM 100696 / MI-1) (Desulfotomaculum reducens)).